A 78-amino-acid chain; its full sequence is Large ribosomal subunit protein bL28 (78 aa).

It belongs to the bacterial ribosomal protein bL28 family.

This is Large ribosomal subunit protein bL28 from Bordetella avium (strain 197N).